Here is a 625-residue protein sequence, read N- to C-terminus: tRNA uridine 5-carboxymethylaminomethyl modification enzyme MnmG (625 aa).

14 to 19 (GAGHAG) lines the FAD pocket. 273–287 (GPRYCPSIEDKIVRF) contributes to the NAD(+) binding site.

It belongs to the MnmG family. In terms of assembly, homodimer. Heterotetramer of two MnmE and two MnmG subunits. It depends on FAD as a cofactor.

It is found in the cytoplasm. Its function is as follows. NAD-binding protein involved in the addition of a carboxymethylaminomethyl (cmnm) group at the wobble position (U34) of certain tRNAs, forming tRNA-cmnm(5)s(2)U34. This Clostridium botulinum (strain Okra / Type B1) protein is tRNA uridine 5-carboxymethylaminomethyl modification enzyme MnmG.